Consider the following 23-residue polypeptide: Benzaldehyde dehydrogenase [NAD(+)] I (23 aa).

It belongs to the aldehyde dehydrogenase family. As to quaternary structure, homotetramer.

It catalyses the reaction benzaldehyde + NAD(+) + H2O = benzoate + NADH + 2 H(+). The polypeptide is Benzaldehyde dehydrogenase [NAD(+)] I (Acinetobacter guillouiae (Acinetobacter genomosp. 11)).